Here is a 238-residue protein sequence, read N- to C-terminus: Ubiquinone biosynthesis O-methyltransferase (238 aa).

S-adenosyl-L-methionine is bound by residues arginine 39, glycine 58, aspartate 79, and methionine 123.

The protein belongs to the methyltransferase superfamily. UbiG/COQ3 family.

It carries out the reaction a 3-demethylubiquinol + S-adenosyl-L-methionine = a ubiquinol + S-adenosyl-L-homocysteine + H(+). It catalyses the reaction a 3-(all-trans-polyprenyl)benzene-1,2-diol + S-adenosyl-L-methionine = a 2-methoxy-6-(all-trans-polyprenyl)phenol + S-adenosyl-L-homocysteine + H(+). Its pathway is cofactor biosynthesis; ubiquinone biosynthesis. Its function is as follows. O-methyltransferase that catalyzes the 2 O-methylation steps in the ubiquinone biosynthetic pathway. The sequence is that of Ubiquinone biosynthesis O-methyltransferase from Hahella chejuensis (strain KCTC 2396).